A 94-amino-acid chain; its full sequence is Putative pterin-4-alpha-carbinolamine dehydratase (94 aa).

It belongs to the pterin-4-alpha-carbinolamine dehydratase family.

The enzyme catalyses (4aS,6R)-4a-hydroxy-L-erythro-5,6,7,8-tetrahydrobiopterin = (6R)-L-erythro-6,7-dihydrobiopterin + H2O. The protein is Putative pterin-4-alpha-carbinolamine dehydratase of Mycobacterium avium (strain 104).